Here is a 192-residue protein sequence, read N- to C-terminus: uncharacterized protein (192 aa).

The Nudix hydrolase domain occupies 29–160 (HRQAAVLIPI…PLDIYRRGDS (132 aa)). The Nudix box signature appears at 67–89 (GAVDDTDASVIAAALREAEEEVA). Positions 83 and 87 each coordinate Mg(2+).

It belongs to the Nudix hydrolase family. PCD1 subfamily. Requires Mn(2+) as cofactor. Mg(2+) is required as a cofactor.

Probably mediates the hydrolysis of some nucleoside diphosphate derivatives. This is an uncharacterized protein from Escherichia coli (strain SE11).